Consider the following 402-residue polypeptide: Succinylornithine transaminase (402 aa).

Residue K252 is modified to N6-(pyridoxal phosphate)lysine.

The protein belongs to the class-III pyridoxal-phosphate-dependent aminotransferase family. AstC subfamily. Pyridoxal 5'-phosphate serves as cofactor.

The enzyme catalyses N(2)-succinyl-L-ornithine + 2-oxoglutarate = N-succinyl-L-glutamate 5-semialdehyde + L-glutamate. The protein operates within amino-acid degradation; L-arginine degradation via AST pathway; L-glutamate and succinate from L-arginine: step 3/5. In terms of biological role, catalyzes the transamination of N(2)-succinylornithine and alpha-ketoglutarate into N(2)-succinylglutamate semialdehyde and glutamate. Can also act as an acetylornithine aminotransferase. This Photorhabdus laumondii subsp. laumondii (strain DSM 15139 / CIP 105565 / TT01) (Photorhabdus luminescens subsp. laumondii) protein is Succinylornithine transaminase.